We begin with the raw amino-acid sequence, 458 residues long: V-type sodium ATPase subunit B (458 aa).

This sequence belongs to the ATPase alpha/beta chains family.

In terms of biological role, involved in ATP-driven sodium extrusion. The protein is V-type sodium ATPase subunit B (ntpB) of Enterococcus hirae (strain ATCC 9790 / DSM 20160 / JCM 8729 / LMG 6399 / NBRC 3181 / NCIMB 6459 / NCDO 1258 / NCTC 12367 / WDCM 00089 / R).